Here is a 273-residue protein sequence, read N- to C-terminus: Type II methyltransferase M2.MboI (273 aa).

It belongs to the N(4)/N(6)-methyltransferase family.

The enzyme catalyses a 2'-deoxyadenosine in DNA + S-adenosyl-L-methionine = an N(6)-methyl-2'-deoxyadenosine in DNA + S-adenosyl-L-homocysteine + H(+). Functionally, a beta subtype methylase that recognizes the double-stranded sequence 5'-GATC-3', methylates A-2 on both strands, and protects the DNA from cleavage by the MboI endonuclease. This seems to be a weaker methylase than M1.MboI. In Moraxella bovis, this protein is Type II methyltransferase M2.MboI (mboIBM).